Consider the following 587-residue polypeptide: MPTALCPRVLAPKESEEPRKMRSPPGENPSPQGELPSPESSRRLFRRFRYQEAAGPREALQRLWDLCGGWLRPERHTKEQILELLVLEQFLAILPREIQSWVRAQEPESGEQAVAAVEALEREPGRPWQWLKHCEDPVVIDDGDSPLDQEQEQLPVEPHSDLAKNQDAQPITLAQCLGLPSRPPSQLSGDPVLQDAFLLQEENVRDTQQVTTLQLPPSRVSPFKDMILCFSEEDWSLLDPAQTGFYGEFIIGEDYGVSMPPNDLAAQPDLSQGEENEPRVPELQDLQGKEVPQVSYLDSPSLQPFQVEERRKREELQVPEFQACPQTVVPQNTYPAGGNPRSLENSLDEEVTIEIVLSSSGDEDSQHGPYCTEELGSPTEKQRSLPASHRSSTEAGGEVQTSKKSYVCPNCGKIFRWRVNFIRHLRSRREQEKPHECSVCGELFSDSEDLDGHLESHEAQKPYRCGACGKSFRLNSHLLSHRRIHLQPDRLQPVEKREQAASEDADKGPKEPLENGKAKLSFQCCECGKAFQRHDHLARHRSHFHLKDKARPFQCRYCVKSFTQNYDLLRHERLHMKRRSKQALNSY.

Residues 1 to 40 (MPTALCPRVLAPKESEEPRKMRSPPGENPSPQGELPSPES) are disordered. The span at 11-20 (APKESEEPRK) shows a compositional bias: basic and acidic residues. A Glycyl lysine isopeptide (Lys-Gly) (interchain with G-Cter in SUMO2) cross-link involves residue K13. Positions 42–124 (RRLFRRFRYQ…AAVEALEREP (83 aa)) constitute an SCAN box domain. The residue at position 185 (S185) is a Phosphoserine. The region spanning 221 to 291 (SPFKDMILCF…ELQDLQGKEV (71 aa)) is the KRAB domain. The disordered stretch occupies residues 260 to 282 (PPNDLAAQPDLSQGEENEPRVPE). S299 carries the phosphoserine modification. The disordered stretch occupies residues 358-399 (SSSGDEDSQHGPYCTEELGSPTEKQRSLPASHRSSTEAGGEV). A compositionally biased stretch (polar residues) spans 389-399 (HRSSTEAGGEV). K403 is covalently cross-linked (Glycyl lysine isopeptide (Lys-Gly) (interchain with G-Cter in SUMO2)). The C2H2-type 1; degenerate zinc-finger motif lies at 406–428 (YVCPNCGKIFRWRVNFIRHLRSR). 2 consecutive C2H2-type zinc fingers follow at residues 435-457 (HECSVCGELFSDSEDLDGHLESH) and 463-485 (YRCGACGKSFRLNSHLLSHRRIH). Residues 488 to 513 (PDRLQPVEKREQAASEDADKGPKEPL) are disordered. Residue K496 forms a Glycyl lysine isopeptide (Lys-Gly) (interchain with G-Cter in SUMO2) linkage. 2 C2H2-type zinc fingers span residues 522–545 (FQCCECGKAFQRHDHLARHRSHFH) and 553–575 (FQCRYCVKSFTQNYDLLRHERLH).

The protein belongs to the krueppel C2H2-type zinc-finger protein family. As to quaternary structure, interacts (via zinc-fingers) with JARID2. Interacts with NSD1.

The protein resides in the nucleus. Its function is as follows. DNA-binding transcription factor that can both act as an activator and a repressor. The polypeptide is Zinc finger protein 496 (ZNF496) (Homo sapiens (Human)).